The chain runs to 570 residues: Membrane protein insertase YidC (570 aa).

Residues 31–60 show a composition bias toward polar residues; it reads QQPVAQTPSVTIDSNGADSSALLNSPNTGE. Positions 31–79 are disordered; it reads QQPVAQTPSVTIDSNGADSSALLNSPNTGELDTPETASKPATAEDSNIS. 5 consecutive transmembrane segments (helical) span residues 230 to 250, 378 to 398, 444 to 464, 487 to 507, and 522 to 542; these read PTFS…STPE, WGIA…HLSA, LGGC…YWVL, PYFV…SLNP, and PIIF…YWLV.

Belongs to the OXA1/ALB3/YidC family. Type 1 subfamily. Interacts with the Sec translocase complex via SecD. Specifically interacts with transmembrane segments of nascent integral membrane proteins during membrane integration.

It is found in the cell inner membrane. Functionally, required for the insertion and/or proper folding and/or complex formation of integral membrane proteins into the membrane. Involved in integration of membrane proteins that insert both dependently and independently of the Sec translocase complex, as well as at least some lipoproteins. Aids folding of multispanning membrane proteins. This chain is Membrane protein insertase YidC, found in Hahella chejuensis (strain KCTC 2396).